The sequence spans 404 residues: Argininosuccinate synthase (404 aa).

ATP contacts are provided by residues 9–17 (AYSGGLDTS) and A36. L-citrulline is bound at residue Y87. Residue G117 participates in ATP binding. L-aspartate contacts are provided by T119, N123, and D124. N123 serves as a coordination point for L-citrulline. R127, S176, and E261 together coordinate L-citrulline.

The protein belongs to the argininosuccinate synthase family. Type 1 subfamily. Homotetramer.

Its subcellular location is the cytoplasm. It carries out the reaction L-citrulline + L-aspartate + ATP = 2-(N(omega)-L-arginino)succinate + AMP + diphosphate + H(+). The protein operates within amino-acid biosynthesis; L-arginine biosynthesis; L-arginine from L-ornithine and carbamoyl phosphate: step 2/3. The protein is Argininosuccinate synthase of Burkholderia pseudomallei (strain K96243).